An 81-amino-acid polypeptide reads, in one-letter code: UPF0180 protein RBAM_013970 (81 aa).

Belongs to the UPF0180 family.

The sequence is that of UPF0180 protein RBAM_013970 from Bacillus velezensis (strain DSM 23117 / BGSC 10A6 / LMG 26770 / FZB42) (Bacillus amyloliquefaciens subsp. plantarum).